The following is a 354-amino-acid chain: Fructose-bisphosphate aldolase (354 aa).

Serine 50 serves as a coordination point for D-glyceraldehyde 3-phosphate. Aspartate 83 (proton donor) is an active-site residue. Residues histidine 84, aspartate 105, glutamate 142, and histidine 198 each coordinate Zn(2+). Residue glycine 199 coordinates dihydroxyacetone phosphate. Residue histidine 232 coordinates Zn(2+). Residues glycine 233–serine 235 and asparagine 275–threonine 278 each bind dihydroxyacetone phosphate.

Belongs to the class II fructose-bisphosphate aldolase family. Homodimer. Zn(2+) serves as cofactor.

It carries out the reaction beta-D-fructose 1,6-bisphosphate = D-glyceraldehyde 3-phosphate + dihydroxyacetone phosphate. Its pathway is carbohydrate biosynthesis; Calvin cycle. The protein operates within carbohydrate degradation; glycolysis; D-glyceraldehyde 3-phosphate and glycerone phosphate from D-glucose: step 4/4. Its activity is regulated as follows. Activity is stimulated by Fe(2+) in autotrophically grown cells. In terms of biological role, catalyzes the aldol condensation of dihydroxyacetone phosphate (DHAP or glycerone-phosphate) with glyceraldehyde 3-phosphate (G3P) to form fructose 1,6-bisphosphate (FBP) in gluconeogenesis and the reverse reaction in glycolysis. The chain is Fructose-bisphosphate aldolase from Xanthobacter flavus.